A 432-amino-acid polypeptide reads, in one-letter code: Protein trichome birefringence-like 23 (432 aa).

A helical; Signal-anchor for type II membrane protein membrane pass occupies residues 13–35 (QNTYLIKLVAATLITCLAFRFFV). The GDS motif motif lies at 153-155 (GDS). Positions 404-418 (DCLHWCLPGPIDHLN) match the DCXHWCLPGXXDXWN motif motif.

This sequence belongs to the PC-esterase family. TBL subfamily.

It localises to the membrane. May act as a bridging protein that binds pectin and other cell wall polysaccharides. Probably involved in maintaining esterification of pectins. May be involved in the specific O-acetylation of cell wall polymers. The chain is Protein trichome birefringence-like 23 (TBL23) from Arabidopsis thaliana (Mouse-ear cress).